The following is a 507-amino-acid chain: 2,3-bisphosphoglycerate-independent phosphoglycerate mutase (507 aa).

Aspartate 13 and serine 63 together coordinate Mn(2+). Serine 63 functions as the Phosphoserine intermediate in the catalytic mechanism. Substrate is bound by residues histidine 124, 153–154 (RD), arginine 183, arginine 189, 254–257 (RADR), and lysine 330. Residues aspartate 396, histidine 400, aspartate 437, histidine 438, and histidine 456 each coordinate Mn(2+).

Belongs to the BPG-independent phosphoglycerate mutase family. In terms of assembly, monomer. The cofactor is Mn(2+).

It catalyses the reaction (2R)-2-phosphoglycerate = (2R)-3-phosphoglycerate. The protein operates within carbohydrate degradation; glycolysis; pyruvate from D-glyceraldehyde 3-phosphate: step 3/5. Functionally, catalyzes the interconversion of 2-phosphoglycerate and 3-phosphoglycerate. This is 2,3-bisphosphoglycerate-independent phosphoglycerate mutase from Paracoccus denitrificans (strain Pd 1222).